The sequence spans 226 residues: Deoxyribose-phosphate aldolase (226 aa).

Catalysis depends on aspartate 94, which acts as the Proton donor/acceptor. The active-site Schiff-base intermediate with acetaldehyde is the lysine 156. Residue lysine 185 is the Proton donor/acceptor of the active site.

The protein belongs to the DeoC/FbaB aldolase family. DeoC type 1 subfamily.

It is found in the cytoplasm. The enzyme catalyses 2-deoxy-D-ribose 5-phosphate = D-glyceraldehyde 3-phosphate + acetaldehyde. It participates in carbohydrate degradation; 2-deoxy-D-ribose 1-phosphate degradation; D-glyceraldehyde 3-phosphate and acetaldehyde from 2-deoxy-alpha-D-ribose 1-phosphate: step 2/2. Its function is as follows. Catalyzes a reversible aldol reaction between acetaldehyde and D-glyceraldehyde 3-phosphate to generate 2-deoxy-D-ribose 5-phosphate. In Burkholderia lata (strain ATCC 17760 / DSM 23089 / LMG 22485 / NCIMB 9086 / R18194 / 383), this protein is Deoxyribose-phosphate aldolase.